Reading from the N-terminus, the 329-residue chain is MKRKPEEQEGFVFVRKGKEKAGSKRRKSSVEDDPDTSQTDGLVELPVSDTPIVKRNKELRKGKGRRSSLDQRGKRASSIGTGFEALPHADVPSHEYYRHISKDLSEPLRIKQLLLWASSKALEEQRKKYGETEEASEAAIARSIVQEVLNELLANKVSVSWYQRPPDAVIPNKPHPQNLKNAQLVDELSAKLTQLHNEEAAWRAVAANSVSSDKSILSFKKAVESIDSKQDLDKQDSPLPPDDAPELPNISKLKPKFHTLLDMLAENIHTLHSLTNAGPEVRSSYGRLAAQDFIAHRKSLLSFSKYVDTMNLLRLLSEASYKSSSNESV.

2 disordered regions span residues 1–81 (MKRK…SIGT) and 228–249 (SKQDLDKQDSPLPPDDAPELPN). Over residues 15 to 27 (RKGKEKAGSKRRK) the composition is skewed to basic residues. The segment covering 55–73 (RNKELRKGKGRRSSLDQRG) has biased composition (basic and acidic residues).

As to quaternary structure, component of the NMS super complex which consists of mis12, mis13, mis14, ndc80, nnf1, nuf2, sos7, spc7, spc24 and spc25. Interacts with dis1, mal2, mis14, ppe1 and ekc1.

Its subcellular location is the nucleus. In terms of biological role, acts as a component of the NMS (Ndc80-MIND-Spc7) super complex which has a role in kinetochore function during late meiotic prophase and throughout the mitotic cell cycle. Required for correct segregation of chromosomes and for maintaining the inner centromere structure. In Schizosaccharomyces pombe (strain 972 / ATCC 24843) (Fission yeast), this protein is Kinetochore protein mis13 (mis13).